A 318-amino-acid polypeptide reads, in one-letter code: Dehydrogenase/reductase SDR family member 7C-B (318 aa).

A signal peptide spans 1–32 (MGMSDIMWLDVSWAWLVLTAVLLAAAVFYLYT). 49–73 (LITDSLSTVGNECAKLFHAGGARLI) serves as a coordination point for NAD(+). A substrate-binding site is contributed by S186. The Proton acceptor role is filled by Y199.

The protein belongs to the short-chain dehydrogenases/reductases (SDR) family.

Its subcellular location is the secreted. Functionally, putative oxidoreductase. This Danio rerio (Zebrafish) protein is Dehydrogenase/reductase SDR family member 7C-B (dhrs7cb).